The following is a 234-amino-acid chain: Leucyl/phenylalanyl-tRNA--protein transferase (234 aa).

It belongs to the L/F-transferase family.

Its subcellular location is the cytoplasm. The catalysed reaction is N-terminal L-lysyl-[protein] + L-leucyl-tRNA(Leu) = N-terminal L-leucyl-L-lysyl-[protein] + tRNA(Leu) + H(+). It carries out the reaction N-terminal L-arginyl-[protein] + L-leucyl-tRNA(Leu) = N-terminal L-leucyl-L-arginyl-[protein] + tRNA(Leu) + H(+). It catalyses the reaction L-phenylalanyl-tRNA(Phe) + an N-terminal L-alpha-aminoacyl-[protein] = an N-terminal L-phenylalanyl-L-alpha-aminoacyl-[protein] + tRNA(Phe). Its function is as follows. Functions in the N-end rule pathway of protein degradation where it conjugates Leu, Phe and, less efficiently, Met from aminoacyl-tRNAs to the N-termini of proteins containing an N-terminal arginine or lysine. This is Leucyl/phenylalanyl-tRNA--protein transferase from Syntrophobacter fumaroxidans (strain DSM 10017 / MPOB).